The sequence spans 845 residues: Envelope glycoprotein B (845 aa).

Residues 1–41 (MSFTDQTYTRSCMHTCITRDHRLYGIVIISLLLLLDNSVFC) form the signal peptide. At 42–727 (QNENKVIDIK…SGVASFLQNP (686 aa)) the chain is on the virion surface side. Intrachain disulfides connect Cys62-Cys523, Cys80-Cys479, Cys153-Cys218, Cys310-Cys358, and Cys552-Cys591. The interval 120 to 126 (RYADVFS) is involved in fusion and/or binding to host membrane. N-linked (GlcNAc...) asparagine; by host glycosylation occurs at Asn175. The tract at residues 204–212 (LPGTWLRKT) is involved in fusion and/or binding to host membrane. Residues Asn328, Asn388, Asn414, Asn420, Asn425, Asn564, and Asn632 are each glycosylated (N-linked (GlcNAc...) asparagine; by host). The interval 677–725 (LEQAIVTKPYVPPAGMQQALQGLSGVGSVITGTLGAMQSLVSGVASFLQ) is hydrophobic membrane proximal region. Residues 728–748 (FGGTLSIILIGCIIVGVIIIY) traverse the membrane as a helical segment. Over 749 to 845 (NRMNQSRGSP…GYTTLSSMNI (97 aa)) the chain is Intravirion. Residues 837 to 840 (YTTL) carry the Internalization motif motif.

This sequence belongs to the herpesviridae glycoprotein B family. In terms of assembly, homotrimer; disulfide-linked. Binds to heparan sulfate proteoglycans. Interacts with gH/gL heterodimer. Post-translationally, a proteolytic cleavage by host furin generates two subunits that remain linked by disulfide bonds.

The protein localises to the virion membrane. The protein resides in the host cell membrane. It is found in the host endosome membrane. Its subcellular location is the host Golgi apparatus membrane. Functionally, envelope glycoprotein that forms spikes at the surface of virion envelope. Essential for the initial attachment to heparan sulfate moieties of the host cell surface proteoglycans. Involved in fusion of viral and cellular membranes leading to virus entry into the host cell. Following initial binding to its host receptors, membrane fusion is mediated by the fusion machinery composed at least of gB and the heterodimer gH/gL. May be involved in the fusion between the virion envelope and the outer nuclear membrane during virion egress. The chain is Envelope glycoprotein B from Elephas maximus (Indian elephant).